The following is a 765-amino-acid chain: Phosphoribosylformylglycinamidine synthase subunit PurL (765 aa).

Residues 1–13 show a composition bias toward polar residues; that stretch reads MTVSPTSAPTQAI. The tract at residues 1–32 is disordered; sequence MTVSPTSAPTQAIDTVERAATTPDEPQPFGEL. His65 is a catalytic residue. The ATP site is built by Tyr68 and Lys112. Residue Glu114 participates in Mg(2+) binding. Residues 115–118 and Arg137 contribute to the substrate site; that span reads SHNH. The active-site Proton acceptor is His116. Mg(2+) is bound at residue Asp138. Position 263 (Gln263) interacts with substrate. Mg(2+) is bound at residue Asp291. 335–337 contacts substrate; that stretch reads ESQ. ATP contacts are provided by Asn523 and Gly560. Position 561 (Asn561) interacts with Mg(2+). Ser563 is a binding site for substrate.

It belongs to the FGAMS family. In terms of assembly, monomer. Part of the FGAM synthase complex composed of 1 PurL, 1 PurQ and 2 PurS subunits.

The protein localises to the cytoplasm. The enzyme catalyses N(2)-formyl-N(1)-(5-phospho-beta-D-ribosyl)glycinamide + L-glutamine + ATP + H2O = 2-formamido-N(1)-(5-O-phospho-beta-D-ribosyl)acetamidine + L-glutamate + ADP + phosphate + H(+). It functions in the pathway purine metabolism; IMP biosynthesis via de novo pathway; 5-amino-1-(5-phospho-D-ribosyl)imidazole from N(2)-formyl-N(1)-(5-phospho-D-ribosyl)glycinamide: step 1/2. Functionally, part of the phosphoribosylformylglycinamidine synthase complex involved in the purines biosynthetic pathway. Catalyzes the ATP-dependent conversion of formylglycinamide ribonucleotide (FGAR) and glutamine to yield formylglycinamidine ribonucleotide (FGAM) and glutamate. The FGAM synthase complex is composed of three subunits. PurQ produces an ammonia molecule by converting glutamine to glutamate. PurL transfers the ammonia molecule to FGAR to form FGAM in an ATP-dependent manner. PurS interacts with PurQ and PurL and is thought to assist in the transfer of the ammonia molecule from PurQ to PurL. The sequence is that of Phosphoribosylformylglycinamidine synthase subunit PurL from Mycobacterium avium (strain 104).